The chain runs to 250 residues: Electron transport regulator A (250 aa).

The HTH crp-type domain maps to 164-237; it reads KNAEERLAAF…GKYIIIVDHH (74 aa). A DNA-binding region (H-T-H motif) is located at residues 197–216; sequence RGDIGNYLGLTVETISRLLG.

Monomer.

In terms of biological role, regulates anaerobic growth on fumarate, nitrite, Fe(3+), TMAO, DMSO, thiosulfate and sulfite, but not on nitrate nor Mn(4+). This is Electron transport regulator A (etrA) from Shewanella oneidensis (strain ATCC 700550 / JCM 31522 / CIP 106686 / LMG 19005 / NCIMB 14063 / MR-1).